We begin with the raw amino-acid sequence, 1107 residues long: Polyphosphatidylinositol phosphatase INP53 (1107 aa).

The 341-residue stretch at 142–482 (LKKLLSNGSF…GDQISQIYTG (341 aa)) folds into the SAC domain. Ser497 is subject to Phosphoserine. The tract at residues 926–1107 (TASSVASSSP…LDSWQPLTPK (182 aa)) is disordered. Residues 927 to 942 (ASSVASSSPVSSASAS) show a composition bias toward low complexity. Polar residues predominate over residues 943-956 (LQPVRTQNSSQSRT). Residue Ser986 is modified to Phosphoserine. Polar residues-rich tracts occupy residues 987-1005 (PTPQ…NIQE), 1020-1038 (FSQN…SPMS), 1045-1063 (NSAS…QTPT), and 1097-1107 (TLDSWQPLTPK). Phosphoserine is present on Ser1035. Thr1105 is modified (phosphothreonine).

Belongs to the synaptojanin family. It in the central section; belongs to the inositol 1,4,5-trisphosphate 5-phosphatase family. In terms of assembly, interacts (via SAC domain) with BSP1; the interaction is direct. Interacts with CHC1.

It is found in the cytoplasm. The enzyme catalyses a 1,2-diacyl-sn-glycero-3-phospho-(1D-myo-inositol-4,5-bisphosphate) + H2O = a 1,2-diacyl-sn-glycero-3-phospho-(1D-myo-inositol 4-phosphate) + phosphate. In terms of biological role, dephosphorylates a number of phosphatidylinositols (PIs) like phosphatidylinositol 4,5-bisphosphate (PtdIns(4,5)P2), but also phosphatidylinositol 3-phosphate (PtdIns(3)P), phosphatidylinositol 4-phosphate (PtdIns(4)P), and phosphatidylinositol 3,5-bisphosphate (PtdIns(3,5)P2). Controls the cellular levels and subcellular distribution of phosphatidylinositol 3-phosphate and phosphatidylinositol 4,5-bisphosphate. Plays an essential role in a TGN (trans Golgi network)-to-early endosome pathway. Involved in clathrin-mediated protein sorting at the TGN. This chain is Polyphosphatidylinositol phosphatase INP53 (INP53), found in Saccharomyces cerevisiae (strain ATCC 204508 / S288c) (Baker's yeast).